Consider the following 270-residue polypeptide: Urease accessory protein UreD (270 aa).

Belongs to the UreD family. In terms of assembly, ureD, UreF and UreG form a complex that acts as a GTP-hydrolysis-dependent molecular chaperone, activating the urease apoprotein by helping to assemble the nickel containing metallocenter of UreC. The UreE protein probably delivers the nickel.

It localises to the cytoplasm. Functionally, required for maturation of urease via the functional incorporation of the urease nickel metallocenter. The sequence is that of Urease accessory protein UreD from Klebsiella pneumoniae.